Here is a 254-residue protein sequence, read N- to C-terminus: Flagellar L-ring protein 1 (254 aa).

Positions 1–26 (MSPFSSAFRPRRIAISALLLAIGALA) are cleaved as a signal peptide.

Belongs to the FlgH family. In terms of assembly, the basal body constitutes a major portion of the flagellar organelle and consists of four rings (L,P,S, and M) mounted on a central rod.

The protein localises to the cell outer membrane. It is found in the bacterial flagellum basal body. Functionally, assembles around the rod to form the L-ring and probably protects the motor/basal body from shearing forces during rotation. In Bradyrhizobium diazoefficiens (strain JCM 10833 / BCRC 13528 / IAM 13628 / NBRC 14792 / USDA 110), this protein is Flagellar L-ring protein 1 (flgH1).